The following is a 368-amino-acid chain: 4-hydroxy-3-methylbut-2-en-1-yl diphosphate synthase (flavodoxin) (368 aa).

[4Fe-4S] cluster is bound by residues Cys-271, Cys-274, Cys-306, and Glu-313.

The protein belongs to the IspG family. Requires [4Fe-4S] cluster as cofactor.

It catalyses the reaction (2E)-4-hydroxy-3-methylbut-2-enyl diphosphate + oxidized [flavodoxin] + H2O + 2 H(+) = 2-C-methyl-D-erythritol 2,4-cyclic diphosphate + reduced [flavodoxin]. It participates in isoprenoid biosynthesis; isopentenyl diphosphate biosynthesis via DXP pathway; isopentenyl diphosphate from 1-deoxy-D-xylulose 5-phosphate: step 5/6. In terms of biological role, converts 2C-methyl-D-erythritol 2,4-cyclodiphosphate (ME-2,4cPP) into 1-hydroxy-2-methyl-2-(E)-butenyl 4-diphosphate. This Haemophilus influenzae (strain 86-028NP) protein is 4-hydroxy-3-methylbut-2-en-1-yl diphosphate synthase (flavodoxin).